Consider the following 501-residue polypeptide: Cytochrome P450 71D6 (501 aa).

Cys442 lines the heme pocket.

This sequence belongs to the cytochrome P450 family. The cofactor is heme.

This is Cytochrome P450 71D6 (CYP71D6) from Solanum chacoense (Chaco potato).